The following is a 192-amino-acid chain: Cytidylate kinase (192 aa).

Residue G7–T15 participates in ATP binding.

It belongs to the cytidylate kinase family. Type 2 subfamily.

It is found in the cytoplasm. It catalyses the reaction CMP + ATP = CDP + ADP. It carries out the reaction dCMP + ATP = dCDP + ADP. The sequence is that of Cytidylate kinase from Halorubrum lacusprofundi (strain ATCC 49239 / DSM 5036 / JCM 8891 / ACAM 34).